The chain runs to 464 residues: Soluble pyridine nucleotide transhydrogenase (464 aa).

Position 35–44 (35–44 (DSRRQVGGNC)) interacts with FAD.

Belongs to the class-I pyridine nucleotide-disulfide oxidoreductase family. The cofactor is FAD.

Its subcellular location is the cytoplasm. It catalyses the reaction NAD(+) + NADPH = NADH + NADP(+). Conversion of NADPH, generated by peripheral catabolic pathways, to NADH, which can enter the respiratory chain for energy generation. The sequence is that of Soluble pyridine nucleotide transhydrogenase from Pseudomonas fluorescens (strain SBW25).